The primary structure comprises 140 residues: Nucleoside diphosphate kinase (140 aa).

ATP contacts are provided by Lys-11, Phe-59, Arg-87, Thr-93, Arg-104, and Asn-114. The active-site Pros-phosphohistidine intermediate is His-117.

It belongs to the NDK family. As to quaternary structure, homotetramer. It depends on Mg(2+) as a cofactor.

It localises to the cytoplasm. The catalysed reaction is a 2'-deoxyribonucleoside 5'-diphosphate + ATP = a 2'-deoxyribonucleoside 5'-triphosphate + ADP. The enzyme catalyses a ribonucleoside 5'-diphosphate + ATP = a ribonucleoside 5'-triphosphate + ADP. In terms of biological role, major role in the synthesis of nucleoside triphosphates other than ATP. The ATP gamma phosphate is transferred to the NDP beta phosphate via a ping-pong mechanism, using a phosphorylated active-site intermediate. The protein is Nucleoside diphosphate kinase of Bartonella tribocorum (strain CIP 105476 / IBS 506).